The following is a 443-amino-acid chain: Methionine aminopeptidase 2-1 (443 aa).

The interval 1–90 (MAAQADDELN…RVPVSELFPN (90 aa)) is disordered. A compositionally biased stretch (acidic residues) spans 33 to 48 (ADNDDSEDDEKEEEGG). The segment covering 58 to 73 (KKKKKRKPKKKKKGGA) has biased composition (basic residues). Histidine 196 contributes to the substrate binding site. The a divalent metal cation site is built by aspartate 216, aspartate 227, and histidine 296. Histidine 304 is a substrate binding site. Glutamate 329 and glutamate 424 together coordinate a divalent metal cation.

Belongs to the peptidase M24A family. Methionine aminopeptidase eukaryotic type 2 subfamily. It depends on Co(2+) as a cofactor. Requires Zn(2+) as cofactor. Mn(2+) is required as a cofactor. The cofactor is Fe(2+).

It is found in the cytoplasm. It catalyses the reaction Release of N-terminal amino acids, preferentially methionine, from peptides and arylamides.. Its function is as follows. Cotranslationally removes the N-terminal methionine from nascent proteins. The N-terminal methionine is often cleaved when the second residue in the primary sequence is small and uncharged (Met-Ala-, Cys, Gly, Pro, Ser, Thr, or Val). The chain is Methionine aminopeptidase 2-1 from Talaromyces stipitatus (strain ATCC 10500 / CBS 375.48 / QM 6759 / NRRL 1006) (Penicillium stipitatum).